Consider the following 974-residue polypeptide: Glycine dehydrogenase (decarboxylating) (974 aa).

Lys720 is modified (N6-(pyridoxal phosphate)lysine).

The protein belongs to the GcvP family. In terms of assembly, the glycine cleavage system is composed of four proteins: P, T, L and H. Pyridoxal 5'-phosphate is required as a cofactor.

The catalysed reaction is N(6)-[(R)-lipoyl]-L-lysyl-[glycine-cleavage complex H protein] + glycine + H(+) = N(6)-[(R)-S(8)-aminomethyldihydrolipoyl]-L-lysyl-[glycine-cleavage complex H protein] + CO2. In terms of biological role, the glycine cleavage system catalyzes the degradation of glycine. The P protein binds the alpha-amino group of glycine through its pyridoxal phosphate cofactor; CO(2) is released and the remaining methylamine moiety is then transferred to the lipoamide cofactor of the H protein. This chain is Glycine dehydrogenase (decarboxylating), found in Cupriavidus metallidurans (strain ATCC 43123 / DSM 2839 / NBRC 102507 / CH34) (Ralstonia metallidurans).